We begin with the raw amino-acid sequence, 807 residues long: MSKQDSLWFKSLRWIQKKLVHTIVVPQDPFADLNLDSDRPLVYVMKTESISDIAALSEVTDRLGLPSPYQPLDVEGEQAPRVVCVEGAKPLLGEREGNEFYLESFSRLLSAHKKHPELDIQLVPVSLYWGRTPGKEDDSMKAAVLERESPTWLRKCLMIIFLGRHNFVQFSNAMSLRYMADEHGTDKRIAQKLARVARVHFSRQRKVMTGPVLPNRQNLFHALLKSESMKKAILEEAQSKKISEAKARETAMEYLDEIAADYSDSLVRIAERFLTWLWNKLYKGINIKGAEQIRQLHHDGHEIVYVPCHRSHMDYLLLSYILYYQGMVPPHIAAGINLNFWPAGPMFRRGGAFFIRRSFRGNKLYTAVFREYLDQLFAKGYSVEYFTEGGRSRTGRLLAPKTGMIAMTLNSVLRGVERPVTLVPVYLGYDHVMEVATYHKELSGKKKQKESVWQVFGAIRKLGNFGQGYVNFGEPITLHSYLNEQVPEWREELAQDPEQKPSWLTPVVNTLANRVMTRINDAAAVSSITLTSLVLLASEQNALQRSQLEKQLDLYLSLLKSVPYTGYTSVVEGDGAKLIAQGLELKKLKLDSDPLGDIISIDESLAIAMTYYRNNIIHLLVIPSLIASCLTRQDECSRDEIIATVKDFYPLLQAELFMGIDNLETYVNQLLDQLLAEGLIDEDKHFSVKPDGLNQLLLLAGTISETMQRYAIIFNLLAASPKIERSELESDSHQLAQRLGALHGITAPEFYDKKLYGTLSVKLKELGYLADDSHSEDVQRIRTRANSLLRSSVRQTIVDSVAAEHQA.

An HXXXXD motif motif is present at residues 308–313 (CHRSHM).

Belongs to the GPAT/DAPAT family.

Its subcellular location is the cell inner membrane. It carries out the reaction sn-glycerol 3-phosphate + an acyl-CoA = a 1-acyl-sn-glycero-3-phosphate + CoA. It participates in phospholipid metabolism; CDP-diacylglycerol biosynthesis; CDP-diacylglycerol from sn-glycerol 3-phosphate: step 1/3. This Shewanella loihica (strain ATCC BAA-1088 / PV-4) protein is Glycerol-3-phosphate acyltransferase.